The primary structure comprises 218 residues: Adenylate kinase (218 aa).

10–15 (GAGKGT) lines the ATP pocket. The segment at 30 to 59 (STGDMLRAAVKQGTPLGQEAKKVMDAGGLV) is NMP. AMP contacts are provided by residues Thr-31, Arg-36, 57–59 (GLV), 85–88 (GFPR), and Gln-92. The interval 122–159 (GRRVHPASGRSYHVRFNPPKQEGLDDVTGEPLVQRDDD) is LID. Residues Arg-123 and 132 to 133 (SY) each bind ATP. 2 residues coordinate AMP: Arg-156 and Arg-167. Position 203 (Gly-203) interacts with ATP.

Belongs to the adenylate kinase family. Monomer.

Its subcellular location is the cytoplasm. The catalysed reaction is AMP + ATP = 2 ADP. Its pathway is purine metabolism; AMP biosynthesis via salvage pathway; AMP from ADP: step 1/1. Its function is as follows. Catalyzes the reversible transfer of the terminal phosphate group between ATP and AMP. Plays an important role in cellular energy homeostasis and in adenine nucleotide metabolism. The chain is Adenylate kinase from Bordetella petrii (strain ATCC BAA-461 / DSM 12804 / CCUG 43448).